A 490-amino-acid chain; its full sequence is Solute carrier family 2, facilitated glucose transporter member 1 (490 aa).

At 1–10 the chain is on the cytoplasmic side; the sequence is MESGSKMTAR. A helical membrane pass occupies residues 11-32; that stretch reads LMLAVGGAVLGSLQFGYNTGVI. The Extracellular portion of the chain corresponds to 33 to 65; the sequence is NRPQKVIEDFYNHTWLYRYEEPISPATLTTLWS. Asparagine 44 carries an N-linked (GlcNAc...) asparagine glycan. The chain crosses the membrane as a helical span at residues 66–86; sequence LSVAIFSVGGMIGSFSVGLFV. At 87-89 the chain is on the cytoplasmic side; it reads NRF. A helical membrane pass occupies residues 90 to 111; sequence GRRNSMLMSNILAFLAAVLMGF. Over 112 to 119 the chain is Extracellular; sequence SKMALSFE. Residues 120-143 traverse the membrane as a helical segment; sequence MLILGRFIIGLYSGLTTGFVPMYV. Residues 144–154 are Cytoplasmic-facing; the sequence is GEVSPTALRGA. The helical transmembrane segment at 155 to 175 threads the bilayer; it reads LGTFHQLGIVLGILIAQVFGL. A D-glucose-binding site is contributed by glutamine 160. Over 176-184 the chain is Extracellular; that stretch reads DLIMGNDSL. A helical transmembrane segment spans residues 185 to 205; the sequence is WPLLLGFIFVPALLQCIILPF. Residues 206–270 lie on the Cytoplasmic side of the membrane; sequence APESPRFLLI…LFRSPMYRQP (65 aa). A helical membrane pass occupies residues 271–292; it reads ILIAIVLQLSQQLSGINAVFYY. Residues 281–282 and asparagine 287 each bind D-glucose; that span reads QQ. Over 293–305 the chain is Extracellular; it reads STSIFEKSGVEQP. A helical membrane pass occupies residues 306-327; that stretch reads VYATIGSGVVNTAFTVVSLFVV. Asparagine 316 is a binding site for D-glucose. At 328 to 333 the chain is on the cytoplasmic side; sequence ERAGRR. A helical membrane pass occupies residues 334–354; the sequence is TLHLIGLAGMAGCAILMTIAL. Residues 355–364 are Extracellular-facing; it reads TLLDQMPWMS. A helical transmembrane segment spans residues 365 to 387; that stretch reads YLSIVAIFGFVAFFEIGPGPIPW. D-glucose contacts are provided by glutamate 379 and tryptophan 387. The Cytoplasmic portion of the chain corresponds to 388 to 400; it reads FIVAELFSQGPRP. The helical transmembrane segment at 401–421 threads the bilayer; the sequence is AAFAVAGLSNWTSNFIVGMGF. Residues 422–428 lie on the Extracellular side of the membrane; sequence QYIAQLC. The helical transmembrane segment at 429 to 449 threads the bilayer; sequence GSYVFIIFTVLLVLFFIFTYF. Topologically, residues 450-490 are cytoplasmic; the sequence is KVPETKGRTFDEIAYRFRQGGASQSDKTPDEFHSLGADSQV. Positions 470-490 are disordered; the sequence is GASQSDKTPDEFHSLGADSQV.

This sequence belongs to the major facilitator superfamily. Sugar transporter (TC 2.A.1.1) family. Glucose transporter subfamily. In terms of assembly, interacts with isoform 1 of BSG. Retinal cones (at protein level).

It is found in the cell membrane. Its subcellular location is the photoreceptor inner segment. The enzyme catalyses D-glucose(out) = D-glucose(in). Its function is as follows. Facilitative glucose transporter, which is responsible for constitutive or basal glucose uptake. Has a very broad substrate specificity; can transport a wide range of aldoses including both pentoses and hexoses. Most important energy carrier of the brain: present at the blood-brain barrier and assures the energy-independent, facilitative transport of glucose into the brain. In association with BSG and NXNL1, promotes retinal cone survival by increasing glucose uptake into photoreceptors. Required for mesendoderm differentiation. In Gallus gallus (Chicken), this protein is Solute carrier family 2, facilitated glucose transporter member 1.